The sequence spans 383 residues: Acetylornithine deacetylase (383 aa).

A Zn(2+)-binding site is contributed by H80. Residue D82 is part of the active site. Position 112 (D112) interacts with Zn(2+). Residue E144 is part of the active site. Residues E145, E169, and H355 each coordinate Zn(2+).

Belongs to the peptidase M20A family. ArgE subfamily. In terms of assembly, homodimer. Zn(2+) is required as a cofactor. Requires Co(2+) as cofactor. Glutathione serves as cofactor.

The protein localises to the cytoplasm. The enzyme catalyses N(2)-acetyl-L-ornithine + H2O = L-ornithine + acetate. The protein operates within amino-acid biosynthesis; L-arginine biosynthesis; L-ornithine from N(2)-acetyl-L-ornithine (linear): step 1/1. Functionally, catalyzes the hydrolysis of the amide bond of N(2)-acetylated L-amino acids. Cleaves the acetyl group from N-acetyl-L-ornithine to form L-ornithine, an intermediate in L-arginine biosynthesis pathway, and a branchpoint in the synthesis of polyamines. The protein is Acetylornithine deacetylase of Shigella dysenteriae serotype 1 (strain Sd197).